The sequence spans 841 residues: MAP7 domain-containing protein 1 (841 aa).

2 disordered regions span residues 1 to 151 and 184 to 208; these read MESG…ERAK and EQRL…EKNK. Residues 22-52 are compositionally biased toward pro residues; that stretch reads PPEPRPSPEGDPSPPPPPMSALVPDTPPDTP. Residues threonine 47 and threonine 51 each carry the phosphothreonine modification. Phosphoserine is present on residues serine 70, serine 86, and serine 93. Threonine 97 carries the phosphothreonine modification. Phosphoserine occurs at positions 113 and 116. The residue at position 118 (threonine 118) is a Phosphothreonine. Serine 123 and serine 125 each carry phosphoserine. The stretch at 128–222 forms a coiled coil; it reads TKQEVKKAGE…AAIQRSVKKT (95 aa). Over residues 130–151 the composition is skewed to basic and acidic residues; it reads QEVKKAGERHKLAKERREERAK. 5 positions are modified to phosphoserine: serine 254, serine 273, serine 313, serine 366, and serine 399. The disordered stretch occupies residues 316 to 813; sequence TLPRNGRDQG…PSGDKSLSRT (498 aa). A compositionally biased stretch (polar residues) spans 365-377; sequence ASASPLTPCSVTR. Positions 405–435 are enriched in basic and acidic residues; sequence RRPEASPVQKKEKKDKERENEKEKSALARER. A coiled-coil region spans residues 412–441; the sequence is VQKKEKKDKERENEKEKSALARERSLKKRQ. Phosphoserine is present on residues serine 442, serine 446, serine 452, serine 454, and serine 460. The span at 460 to 473 shows a compositional bias: low complexity; the sequence is SPKSKARPSSPSTS. Lysine 462 is covalently cross-linked (Glycyl lysine isopeptide (Lys-Gly) (interchain with G-Cter in SUMO2)). Phosphoserine is present on residues serine 479 and serine 496. Residues 479-497 are compositionally biased toward pro residues; it reads SPCPSPGPGHTLPPKPPSP. A compositionally biased stretch (basic and acidic residues) spans 523-539; that stretch reads PEDKSQSKRRASNEKES. Phosphoserine occurs at positions 544, 548, and 552. Pro residues predominate over residues 544–561; that stretch reads SPAPSPAPSPTPAPPQKE. Threonine 554 bears the Phosphothreonine mark. Residues 562-576 are compositionally biased toward low complexity; it reads QPPAETPTDAAVLTS. Over residues 577–586 the composition is skewed to pro residues; sequence PPAPAPPVTP. The stretch at 593–721 forms a coiled coil; the sequence is TTDREEATRL…LEEIMKRTRK (129 aa). A compositionally biased stretch (basic and acidic residues) spans 594-735; sequence TDREEATRLL…ETKQKQDSKE (142 aa). A phosphoserine mark is found at serine 742 and serine 753. Phosphothreonine occurs at positions 813 and 816. Serine 834 is subject to Phosphoserine.

This sequence belongs to the MAP7 family.

The protein resides in the cytoplasm. It localises to the cytoskeleton. The protein localises to the spindle. It is found in the microtubule organizing center. Its subcellular location is the centrosome. The protein resides in the midbody. Microtubule-stabilizing protein involved in the control of cell motility and neurite outgrowth. Facilitate microtubule stabilization through the maintenance of acetylated stable microtubules. This is MAP7 domain-containing protein 1 (MAP7D1) from Homo sapiens (Human).